The sequence spans 276 residues: Large ribosomal subunit protein uL2 (276 aa).

Disordered stretches follow at residues M1 to D20 and T219 to K276. The segment covering N7–D20 has biased composition (polar residues).

This sequence belongs to the universal ribosomal protein uL2 family. As to quaternary structure, part of the 50S ribosomal subunit. Forms a bridge to the 30S subunit in the 70S ribosome.

In terms of biological role, one of the primary rRNA binding proteins. Required for association of the 30S and 50S subunits to form the 70S ribosome, for tRNA binding and peptide bond formation. It has been suggested to have peptidyltransferase activity; this is somewhat controversial. Makes several contacts with the 16S rRNA in the 70S ribosome. The chain is Large ribosomal subunit protein uL2 from Bacillus cereus (strain G9842).